We begin with the raw amino-acid sequence, 634 residues long: Dachshund homolog 2 (634 aa).

The segment at 76 to 162 is DACHbox-N; it reads RMVDMHGVKV…LITRKDFETL (87 aa). Disordered stretches follow at residues 171–194, 244–286, and 378–416; these read RKRQ…KRSL, LQGN…SGPQ, and IPES…MDHH. Residues 244–269 show a composition bias toward polar residues; the sequence is LQGNGSQNGTESEPDDLNSTTGGSES. A compositionally biased stretch (low complexity) spans 396 to 412; sequence SQTSSHPSSSVSSSPSQ. The tract at residues 488–568 is DACHbox-C; sequence SSVETLLTNI…KAKRKLQEAL (81 aa). Residues 494-588 are a coiled coil; it reads LTNIQGLLKV…EQALKQATSG (95 aa).

This sequence belongs to the DACH/dachshund family. As to quaternary structure, interacts with SIX6. Interacts with EYA2. Expressed in embryo, and at lower levels in the newborn.

The protein resides in the nucleus. Its function is as follows. Transcription factor that is involved in regulation of organogenesis. Seems to be a regulator for SIX1 and SIX6. Seems to act as a corepressor of SIX6 in regulating proliferation by directly repressing cyclin-dependent kinase inhibitors, including the p27Kip1 promoter. Is recruited with SIX6 to the p27Kip1 promoter in embryonal retina. SIX6 corepression also seems to involve NCOR1, TBL1, HDAC1 and HDAC3. May be involved together with PAX3, SIX1, and EYA2 in regulation of myogenesis. In the developing somite, expression of DACH2 and PAX3 is regulated by the overlying ectoderm, and DACH2 and PAX3 positively regulate each other's expression. Probably binds to DNA via its DACHbox-N domain. The sequence is that of Dachshund homolog 2 (Dach2) from Mus musculus (Mouse).